We begin with the raw amino-acid sequence, 731 residues long: Alpha-xylosidase (731 aa).

Residues Asp-353 and Glu-356 contribute to the active site. The active-site Proton donor is Asp-428.

This sequence belongs to the glycosyl hydrolase 31 family. In terms of assembly, monomer.

The catalysed reaction is Hydrolysis of terminal, non-reducing alpha-D-xylose residues with release of alpha-D-xylose.. Catalyzes the liberation of alpha-xylose from the non-reducing terminal glucose of xyloglucan oligosaccharides. Has high hydrolytic activity on the disaccharide isoprimeverose. Follows a retaining mechanism of substrate hydrolysis. The protein is Alpha-xylosidase (xylS) of Saccharolobus solfataricus (strain ATCC 35092 / DSM 1617 / JCM 11322 / P2) (Sulfolobus solfataricus).